The following is an 839-amino-acid chain: MANILRKVIENDKGELRKLEKIAKKVESYADQMVSLSDRDLQGKTLEFKERYQKGETLEQLLPEAFAVVREAAKRVLGLFPYRVQIMGGIVLHNGDVPEMRTGEGKTLTATMPVYLNAIAGEGVHVITVNEYLSTRDATEMGEVYSWLGLSVGINLAAKSPAEKREAYNCDITYSTNSEVGFDYLRDNMVVRQEDMVQRPLNFALVDEVDSVLIDEARTPLIVSGAVSSETNQLYIRADMFVKTLTSVDYVIDVPTKTIGLSDSGIDKAESYFNLSNLYDIENVALTHFIDNALRANYIMLLDIDYVVSEDGEILIVDQFTGRTMEGRRFSDGLHQAIEAKEGVRIQEESKTSASITYQNMFRMYKKLAGMTGTAKTEEEEFREVYNMRIIPIPTNRPIARIDHTDLLYPTLESKFRAVVEDVKTRHAKGQPILVGTVAVETSDLISRKLVEAGIPHEVLNAKNHFKEAQIIMNAGQRGAVTIATNMAGRGTDIKLGEGVRELGGLCVIGTERHESRRIDNQLRGRSGRQGDPGESQFYLSLEDDLMRRFGSDRIKAFLDRMKLDEEDTVIKSGMLGRQVESAQKRVEGNNYDTRKQVLQYDDVMREQREIIYANRRDVITANRDLGPEIKAMIKRTIDRAVDAHARSNRKDAIDAIVTFARTSLVPEESISAKELRGLKDDQIKEKLYQRALAIYDQQLSKLRDQEAIIEFQKVLILMIVDNKWTEHIDALDQLRNAVGLRGYAQNNPVVEYQAEGFKMFQDMIGAIEFDVTRTMMKAQIHEQERERASQRATTAAPQNIQSQQSANTDDLPKVERNEACPCGSGKKFKNCHGRKSFS.

ATP is bound by residues Q85, 103-107, and D493; that span reads GEGKT. The span at 780–790 shows a compositional bias: basic and acidic residues; the sequence is QIHEQERERAS. The tract at residues 780–839 is disordered; that stretch reads QIHEQERERASQRATTAAPQNIQSQQSANTDDLPKVERNEACPCGSGKKFKNCHGRKSFS. A compositionally biased stretch (polar residues) spans 791–809; that stretch reads QRATTAAPQNIQSQQSANT. Zn(2+) contacts are provided by C821, C823, C832, and H833. Residues 827–839 show a composition bias toward basic residues; sequence KKFKNCHGRKSFS.

It belongs to the SecA family. In terms of assembly, monomer and homodimer. Part of the essential Sec protein translocation apparatus which comprises SecA, SecYEG and auxiliary proteins SecDF. Other proteins may also be involved. Requires Zn(2+) as cofactor.

It is found in the cell membrane. Its subcellular location is the cytoplasm. It carries out the reaction ATP + H2O + cellular proteinSide 1 = ADP + phosphate + cellular proteinSide 2.. Functionally, part of the Sec protein translocase complex. Interacts with the SecYEG preprotein conducting channel. Has a central role in coupling the hydrolysis of ATP to the transfer of proteins into and across the cell membrane, serving as an ATP-driven molecular motor driving the stepwise translocation of polypeptide chains across the membrane. This is Protein translocase subunit SecA from Streptococcus pyogenes serotype M28 (strain MGAS6180).